The primary structure comprises 382 residues: Alanine racemase (382 aa).

K39 functions as the Proton acceptor; specific for D-alanine in the catalytic mechanism. An N6-(pyridoxal phosphate)lysine modification is found at K39. Residue R138 participates in substrate binding. The active-site Proton acceptor; specific for L-alanine is the Y265. Substrate is bound at residue M312.

It belongs to the alanine racemase family. Pyridoxal 5'-phosphate is required as a cofactor.

It carries out the reaction L-alanine = D-alanine. Its pathway is amino-acid biosynthesis; D-alanine biosynthesis; D-alanine from L-alanine: step 1/1. Functionally, catalyzes the interconversion of L-alanine and D-alanine. May also act on other amino acids. The polypeptide is Alanine racemase (alr) (Staphylococcus epidermidis (strain ATCC 35984 / DSM 28319 / BCRC 17069 / CCUG 31568 / BM 3577 / RP62A)).